A 201-amino-acid polypeptide reads, in one-letter code: UPF0301 protein BP0319 (201 aa).

Belongs to the UPF0301 (AlgH) family.

This chain is UPF0301 protein BP0319, found in Bordetella pertussis (strain Tohama I / ATCC BAA-589 / NCTC 13251).